A 356-amino-acid polypeptide reads, in one-letter code: Iron-regulated protein A (356 aa).

The signal sequence occupies residues 1–44 (MIVTGSQVRQGLNTWFVLPLRRTAIGLGCAGVATLFSACGQTQA). Hydrophilic regions lie at residues 75–145 (QALQ…EQRE) and 240–310 (GGPL…ATAR).

As to quaternary structure, the iron-regulated protein A is one unit of the protein complex CPVI-4, which is synthesized under iron deficient conditions.

Its subcellular location is the cell inner membrane. In terms of biological role, irpA occurs under iron-deficient growth conditions in cyanobacterium Synechococcus and disappears in cells recovering from iron starvation. It seems to be involved in iron acquisition, uptake or storage. The sequence is that of Iron-regulated protein A (irpA) from Synechococcus elongatus (strain ATCC 33912 / PCC 7942 / FACHB-805) (Anacystis nidulans R2).